The sequence spans 176 residues: MDASHPAVYPVGVPPTAVDPPPRVRMKDYEGMPSTLGGLVLRSGQFACAVTALSIMISIPDFSSVTAFCYLVAAMALQLLWSVSLAVVDGYALLLRRTLHNPVLLSLLVIGDWVTSTLSLAAACSSAGITVLIDSDLAQCAHNHCGRYEAAVAMAFLTWFLVSLSFFFSFWLLATR.

Over 1-45 (MDASHPAVYPVGVPPTAVDPPPRVRMKDYEGMPSTLGGLVLRSGQ) the chain is Cytoplasmic. Residues 46 to 66 (FACAVTALSIMISIPDFSSVT) traverse the membrane as a helical segment. Ala67 is a topological domain (extracellular). A helical membrane pass occupies residues 68 to 88 (FCYLVAAMALQLLWSVSLAVV). At 89–102 (DGYALLLRRTLHNP) the chain is on the cytoplasmic side. Residues 103–123 (VLLSLLVIGDWVTSTLSLAAA) form a helical membrane-spanning segment. Topologically, residues 124–151 (CSSAGITVLIDSDLAQCAHNHCGRYEAA) are extracellular. Residues 152–172 (VAMAFLTWFLVSLSFFFSFWL) form a helical membrane-spanning segment. Topologically, residues 173 to 176 (LATR) are cytoplasmic.

It belongs to the Casparian strip membrane proteins (CASP) family. In terms of assembly, homodimer and heterodimers.

It localises to the cell membrane. The chain is CASP-like protein 5A1 from Selaginella moellendorffii (Spikemoss).